The primary structure comprises 1309 residues: Tetratricopeptide repeat protein 41 (1309 aa).

6 TPR repeats span residues 399 to 432 (PQLEMDFLNEDSNVLVFSLLIEVFMAAISLKPCI), 651 to 684 (WIQEKPNGLLYFQHQSLRNAVEHKMLGVTISVRE), 817 to 851 (LTFLLFLWGFLTLLGNRRANNLFSGAAPFLVSVQS), 859 to 892 (LKAQNAIGELYLDIGMMQKGLTYFQKAWSNLLRF), 989 to 1024 (MSYFSSAVLMEFLFSRSQRKQAIEYYKQVIKIKEKA), and 1042 to 1079 (SDTLCKLAGQLLSGDFCHHATMEAVSYLYRSLDLRAAH).

It is found in the cytoplasm. In Rattus norvegicus (Rat), this protein is Tetratricopeptide repeat protein 41.